The primary structure comprises 376 residues: MAIRKEEESREEQSNSFLLDALYCEEEKWDDEGEEVEENSSLSSSSSPFVVLQQDLFWEDEDLVTLFSKEEEQGLSCLDDVYLSTDRKEAVGWILRVNAHYGFSTLAAVLAITYLDKFICSYSLQRDKPWMLQLVSVACLSLAAKVEETQVPLLLDFQVEETKYVFEAKTIQRMELLILSTLEWKMHLITPISFVDHIIRRLGLKNNAHWDFLNKCHRLLLSVISDSRFVGYLPSVVAAATMMRIIEQVDPFDPLSYQTNLLGVLNLTKEKVKTCYDLILQLPVDRIGLQIQIQSSKKRKSHDSSSSLNSPSCVIDANPFNSDESSNDSWSASSCNPPTSSSSPQQQPPLKKMRGAEENEKKKPILHLPWAIVATP.

Residues lysine 298–proline 376 are disordered. The span at asparagine 321–proline 349 shows a compositional bias: low complexity. Positions arginine 354–lysine 363 are enriched in basic and acidic residues.

The protein belongs to the cyclin family. Cyclin D subfamily. In terms of assembly, interacts with the C-terminal domain of CDKA-1. Interacts with KRP1/ICK1. Interacts with KRP6. Phosphorylated. In terms of tissue distribution, highly expressed in roots and at lower levels in leaves and flowers. Expressed in vegetative shoot meristem and inflorescence.

Functionally, involved in the control of the cell cycle at the G1/S (start) transition. Activates the G1/S phase transition in response to cytokinin hormone signal, but declines in response to sucrose starvation leading to G1 arrest. Involved in the induction of mitotic cell division. Plays an important role in the switch from cell proliferation to the final stages of differentiation during plant development. May not be involved in the activation of cell cycle in the root apical meristem (RAM) in the early phase of seed germination. Promotes divisions in the guard cells (GCs) after the guard mother cells (GMC) symmetric division. This chain is Cyclin-D3-1 (CYCD3-1), found in Arabidopsis thaliana (Mouse-ear cress).